Consider the following 503-residue polypeptide: Cytochrome P450 3A9 (503 aa).

C442 provides a ligand contact to heme.

The protein belongs to the cytochrome P450 family. Requires heme as cofactor. As to expression, mainly expressed in olfactory epithelium.

It is found in the endoplasmic reticulum membrane. It localises to the microsome membrane. The catalysed reaction is an organic molecule + reduced [NADPH--hemoprotein reductase] + O2 = an alcohol + oxidized [NADPH--hemoprotein reductase] + H2O + H(+). Functionally, this isozyme seems to be implicated in olfaction. Active in the demethylation of erythromycin as well as benzphetamine. The sequence is that of Cytochrome P450 3A9 (Cyp3a9) from Rattus norvegicus (Rat).